The sequence spans 527 residues: Eukaryotic translation initiation factor 4B1 (527 aa).

Disordered stretches follow at residues 1–370 (MAKP…REVV) and 453–527 (FGQR…RQGW). 2 stretches are compositionally biased toward low complexity: residues 35 to 45 (AAAGGAASFPS) and 74 to 85 (GAAGAPRRVAPA). Basic and acidic residues-rich tracts occupy residues 102-155 (PRER…DNWG) and 181-194 (RSDD…DKKP). A Nuclear localization signal motif is present at residues 196 to 203 (PSRYPSLG). Gly residues predominate over residues 203-232 (GTGGGFRESSGGGFRESSGGGFRESSGGGF). Positions 293 to 317 (KPREEVLAEKGLDWRKMEGEIEKKT) are enriched in basic and acidic residues. The segment covering 319-336 (RPTSSHSSRPNSAHSSRP) has biased composition (low complexity). Composition is skewed to basic and acidic residues over residues 472-485 (EEPH…DRPR) and 496-510 (PVEE…RERG). Positions 518–527 (SDRSSTRQGW) are enriched in low complexity.

The protein belongs to the eIF-4 subunit B family. In terms of assembly, homodimer. Nonspherical monomer. mRNA-discriminating component of initiation complexes. Post-translationally, phosphorylated.

The protein localises to the nucleus. Promotes the eIF4F and eIF4A RNA-dependent ATP-hydrolysis activity with different efficiency depending on mRNAs, thus providing mRNA discrimination during initiation of translation. The sequence is that of Eukaryotic translation initiation factor 4B1 from Triticum aestivum (Wheat).